The following is a 373-amino-acid chain: Glutamate 5-kinase (373 aa).

Lysine 16 contacts ATP. Positions 56, 143, and 155 each coordinate substrate. 175 to 176 contacts ATP; that stretch reads TD. The region spanning 281-359 is the PUA domain; sequence RGVVTLDDGA…TKIETLLGYK (79 aa).

The protein belongs to the glutamate 5-kinase family.

The protein resides in the cytoplasm. The enzyme catalyses L-glutamate + ATP = L-glutamyl 5-phosphate + ADP. Its pathway is amino-acid biosynthesis; L-proline biosynthesis; L-glutamate 5-semialdehyde from L-glutamate: step 1/2. Catalyzes the transfer of a phosphate group to glutamate to form L-glutamate 5-phosphate. The sequence is that of Glutamate 5-kinase from Teredinibacter turnerae (strain ATCC 39867 / T7901).